The chain runs to 159 residues: Large ribosomal subunit protein uL15 (159 aa).

A disordered region spans residues 1-46 (MKLNELSPSVPKKNRKRIGRGNSSGWGKTAGKGSNGQNSRAGGGVK). A compositionally biased stretch (gly residues) spans 22-34 (NSSGWGKTAGKGS).

Belongs to the universal ribosomal protein uL15 family. As to quaternary structure, part of the 50S ribosomal subunit.

In terms of biological role, binds to the 23S rRNA. This chain is Large ribosomal subunit protein uL15, found in Fusobacterium nucleatum subsp. nucleatum (strain ATCC 25586 / DSM 15643 / BCRC 10681 / CIP 101130 / JCM 8532 / KCTC 2640 / LMG 13131 / VPI 4355).